The chain runs to 561 residues: Potassium-transporting ATPase potassium-binding subunit (561 aa).

The next 11 membrane-spanning stretches (helical) occupy residues 5-25, 60-80, 86-106, 131-151, 177-197, 247-267, 281-301, 376-396, 415-435, 489-509, and 531-551; these read LAAGLQIASVVAVLALVYVPL, CGYAGSVLGFSLAGVLVLYVL, VLPLSHGLAGVSPAVAFNTAV, GLAVQNFVSAAVGMAVAVALI, ILLPLAFVIALILLSQGVIQS, PTPLSNVVQILAILLIPVALT, LTVLAVMAGIYAVILGVTTAA, GLYGILVLAVIAVFVGGLLVG, ALAVLVMPALVLIGTAITVVL, LGLCMLFGRFLPILFVLALAG, and FAGLLTGTVVLVAALTFFPVL.

The protein belongs to the KdpA family. In terms of assembly, the system is composed of three essential subunits: KdpA, KdpB and KdpC.

The protein localises to the cell membrane. Part of the high-affinity ATP-driven potassium transport (or Kdp) system, which catalyzes the hydrolysis of ATP coupled with the electrogenic transport of potassium into the cytoplasm. This subunit binds the extracellular potassium ions and delivers the ions to the membrane domain of KdpB through an intramembrane tunnel. The polypeptide is Potassium-transporting ATPase potassium-binding subunit (Nocardia farcinica (strain IFM 10152)).